Reading from the N-terminus, the 221-residue chain is Late protein I196L (221 aa).

3 consecutive repeat copies span residues 28 to 48 (SNYLTTAIPNNTSTNISPTTS), 49 to 69 (SNYSMTAIPNNTSTNISPTTS), and 70 to 90 (SNYSMTAIPNNTSTNISPTTS). A 4; approximate repeat occupies 91 to 112 (SNYSMTAIPNNISDKEDYTYFS).

This sequence belongs to the asfivirus I196L family.

The protein is Late protein I196L of African swine fever virus (isolate Tick/Malawi/Lil 20-1/1983) (ASFV).